Reading from the N-terminus, the 552-residue chain is CTP synthase (552 aa).

The interval 1–265 is amidoligase domain; that stretch reads MTKFVFVTGG…DRIVCEKLAL (265 aa). S13 contacts CTP. Residue S13 coordinates UTP. ATP is bound by residues 14-19 and D71; that span reads SLGKGI. Residues D71 and E139 each coordinate Mg(2+). CTP is bound by residues 146–148, 186–191, and K222; these read DIE and KTKPTQ. UTP-binding positions include 186–191 and K222; that span reads KTKPTQ. Residues 290–545 form the Glutamine amidotransferase type-1 domain; it reads TIGMVGKYVD…IKAALAHKQA (256 aa). Residue G351 participates in L-glutamine binding. The active-site Nucleophile; for glutamine hydrolysis is C378. L-glutamine contacts are provided by residues 379–382, E402, and R468; that span reads LGMQ. Active-site residues include H518 and E520.

Belongs to the CTP synthase family. Homotetramer.

The enzyme catalyses UTP + L-glutamine + ATP + H2O = CTP + L-glutamate + ADP + phosphate + 2 H(+). It catalyses the reaction L-glutamine + H2O = L-glutamate + NH4(+). The catalysed reaction is UTP + NH4(+) + ATP = CTP + ADP + phosphate + 2 H(+). The protein operates within pyrimidine metabolism; CTP biosynthesis via de novo pathway; CTP from UDP: step 2/2. With respect to regulation, allosterically activated by GTP, when glutamine is the substrate; GTP has no effect on the reaction when ammonia is the substrate. The allosteric effector GTP functions by stabilizing the protein conformation that binds the tetrahedral intermediate(s) formed during glutamine hydrolysis. Inhibited by the product CTP, via allosteric rather than competitive inhibition. Its function is as follows. Catalyzes the ATP-dependent amination of UTP to CTP with either L-glutamine or ammonia as the source of nitrogen. Regulates intracellular CTP levels through interactions with the four ribonucleotide triphosphates. The polypeptide is CTP synthase (Herminiimonas arsenicoxydans).